The chain runs to 138 residues: Sec-independent protein translocase protein TatB (138 aa).

A helical transmembrane segment spans residues 1–21 (MFDIGATELLVIAIVAILVIG). Positions 74 to 138 (MAKHPADQMQ…EPRLPLEGRD (65 aa)) are disordered. Positions 83–97 (QPLDAPDPALSAAEA) are enriched in low complexity. Positions 98-138 (RAAHTEAAKPARAAEETQADRASADEHPAASEPRLPLEGRD) are enriched in basic and acidic residues.

The protein belongs to the TatB family. In terms of assembly, the Tat system comprises two distinct complexes: a TatABC complex, containing multiple copies of TatA, TatB and TatC subunits, and a separate TatA complex, containing only TatA subunits. Substrates initially bind to the TatABC complex, which probably triggers association of the separate TatA complex to form the active translocon.

It localises to the cell inner membrane. Its function is as follows. Part of the twin-arginine translocation (Tat) system that transports large folded proteins containing a characteristic twin-arginine motif in their signal peptide across membranes. Together with TatC, TatB is part of a receptor directly interacting with Tat signal peptides. TatB may form an oligomeric binding site that transiently accommodates folded Tat precursor proteins before their translocation. This chain is Sec-independent protein translocase protein TatB, found in Erythrobacter litoralis (strain HTCC2594).